Reading from the N-terminus, the 363-residue chain is Uptake hydrogenase small subunit (363 aa).

The segment at residues 1 to 46 (MGAATETFYSVIRRQGITRRSFHKFCSLTATSLGLGPLAASRIANA) is a signal peptide (tat-type signal). The [4Fe-4S] cluster site is built by Cys63, Cys66, Cys161, Cys195, His233, Cys236, Cys261, and Cys267. [3Fe-4S] cluster is bound by residues Cys276, Cys295, and Cys298.

This sequence belongs to the [NiFe]/[NiFeSe] hydrogenase small subunit family. In terms of assembly, heterodimer of a large and a small subunit. It depends on [4Fe-4S] cluster as a cofactor. Requires [3Fe-4S] cluster as cofactor. Post-translationally, predicted to be exported by the Tat system. The position of the signal peptide cleavage has not been experimentally proven.

Its subcellular location is the cell membrane. It catalyses the reaction H2 + A = AH2. Its function is as follows. This enzyme recycles the H(2) produced by nitrogenase to increase the production of ATP and to protect nitrogenase against inhibition or damage by O(2) under carbon- or phosphate-limited conditions. The sequence is that of Uptake hydrogenase small subunit (hupA) from Bradyrhizobium diazoefficiens (strain JCM 10833 / BCRC 13528 / IAM 13628 / NBRC 14792 / USDA 110).